Reading from the N-terminus, the 474-residue chain is L-arabinose isomerase (474 aa).

Mn(2+) contacts are provided by Glu306, Glu331, His348, and His447.

Belongs to the arabinose isomerase family. Requires Mn(2+) as cofactor.

It catalyses the reaction beta-L-arabinopyranose = L-ribulose. The protein operates within carbohydrate degradation; L-arabinose degradation via L-ribulose; D-xylulose 5-phosphate from L-arabinose (bacterial route): step 1/3. Functionally, catalyzes the conversion of L-arabinose to L-ribulose. This is L-arabinose isomerase from Leuconostoc mesenteroides subsp. mesenteroides (strain ATCC 8293 / DSM 20343 / BCRC 11652 / CCM 1803 / JCM 6124 / NCDO 523 / NBRC 100496 / NCIMB 8023 / NCTC 12954 / NRRL B-1118 / 37Y).